The primary structure comprises 290 residues: 33 kDa chaperonin (290 aa).

Disulfide bonds link C231/C233 and C263/C266.

Belongs to the HSP33 family. In terms of processing, under oxidizing conditions two disulfide bonds are formed involving the reactive cysteines. Under reducing conditions zinc is bound to the reactive cysteines and the protein is inactive.

Its subcellular location is the cytoplasm. Functionally, redox regulated molecular chaperone. Protects both thermally unfolding and oxidatively damaged proteins from irreversible aggregation. Plays an important role in the bacterial defense system toward oxidative stress. The chain is 33 kDa chaperonin from Thermotoga maritima (strain ATCC 43589 / DSM 3109 / JCM 10099 / NBRC 100826 / MSB8).